Reading from the N-terminus, the 217-residue chain is Claudin-9 (217 aa).

The Cytoplasmic portion of the chain corresponds to 1 to 12 (MASTGLELLGMT). A helical membrane pass occupies residues 13 to 33 (LAVLGWLGTLVSCALPLWKVT). Residues 34-81 (AFIGNSIVVAQVVWEGLWMSCVVQSTGQMQCKVYDSLLALPQDLQAAR) are Extracellular-facing. A helical transmembrane segment spans residues 82-102 (ALCVVALLLALLGLLVAITGA). The Cytoplasmic portion of the chain corresponds to 103 to 116 (QCTTCVEDEGAKAR). The chain crosses the membrane as a helical span at residues 117–137 (IVLTAGVLLLLSGILVLIPVC). Residues 138–159 (WTAHAIIQDFYNPLVAEALKRE) lie on the Extracellular side of the membrane. A helical membrane pass occupies residues 160–180 (LGASLYLGWAAAALLMLGGGL). Over 181–217 (LCCTCPPSHFERPRGPRLGYSIPSRSGASGLDKRDYV) the chain is Cytoplasmic.

This sequence belongs to the claudin family. As to quaternary structure, interacts with CLDN1, CD81 and OCLN.

It is found in the cell junction. Its subcellular location is the tight junction. It localises to the cell membrane. Functionally, plays a major role in tight junction-specific obliteration of the intercellular space, through calcium-independent cell-adhesion activity. This Mus musculus (Mouse) protein is Claudin-9 (Cldn9).